The sequence spans 159 residues: Na(+)/H(+) antiporter subunit E1 (159 aa).

4 helical membrane passes run 1–21 (MAVQ…VTNS), 27–47 (FVLG…VLPG), 49–69 (FYVI…IELI), and 101–121 (WQIV…VLGV).

The protein belongs to the CPA3 antiporters (TC 2.A.63) subunit E family. In terms of assembly, may form a heterooligomeric complex that consists of seven subunits: mnhA1, mnhB1, mnhC1, mnhD1, mnhE1, mnhF1 and mnhG1.

The protein localises to the cell membrane. In terms of biological role, mnh complex is a Na(+)/H(+) antiporter involved in Na(+) excretion. This chain is Na(+)/H(+) antiporter subunit E1 (mnhE1), found in Staphylococcus aureus (strain bovine RF122 / ET3-1).